Here is a 156-residue protein sequence, read N- to C-terminus: MKLQLVAVGTKMPDWVQTGFIEYLRRFPKDMPFELAEIPAGKRGKNADIKRILEKEGELMLAAVGKNNRIVTLDIPGTPWETPQLAQQLERWKQDGRDVSLLIGGPEGLAPACKAAAEQSWSLSPLTLPHPLVRVLVAESLYRAWSITTNHPYHRE.

S-adenosyl-L-methionine contacts are provided by residues Leu-73, Gly-104, and Leu-123–Leu-128.

Belongs to the RNA methyltransferase RlmH family. Homodimer.

It is found in the cytoplasm. The enzyme catalyses pseudouridine(1915) in 23S rRNA + S-adenosyl-L-methionine = N(3)-methylpseudouridine(1915) in 23S rRNA + S-adenosyl-L-homocysteine + H(+). Functionally, specifically methylates the pseudouridine at position 1915 (m3Psi1915) in 23S rRNA. This chain is Ribosomal RNA large subunit methyltransferase H, found in Yersinia pseudotuberculosis serotype O:1b (strain IP 31758).